A 689-amino-acid chain; its full sequence is Choline transporter-like 1 (689 aa).

A helical membrane pass occupies residues 23-43 (IFWLVVYILFWIALLVIAVFS). Asn-134 carries an N-linked (GlcNAc...) asparagine glycan. 2 consecutive transmembrane segments (helical) span residues 199 to 219 (FSDIYKTWPTVLLLVGLSLIF) and 233 to 255 (IISWLICIFVAVASIGITAVLWW). N-linked (GlcNAc...) asparagine glycosylation occurs at Asn-279. Helical transmembrane passes span 283–303 (IYVLAILATCIMIILLVVIYY) and 333–353 (VLAFIALAVFLSFWMVVIVCL). Asn-375 and Asn-389 each carry an N-linked (GlcNAc...) asparagine glycan. The next 4 helical transmembrane spans lie at 412-432 (IYIIGLVWTSEFIFACQQLVI), 461-481 (LGSVAKGSFIITLFKIPRLIL), 562-582 (LVLFLGKLAVAALCGLISILM), and 591-611 (FYMAPVIIITLFSFFVAHIVL).

The protein belongs to the CTL (choline transporter-like) family.

The protein resides in the membrane. The protein is Choline transporter-like 1 of Aedes aegypti (Yellowfever mosquito).